The primary structure comprises 100 residues: uncharacterized protein (100 aa).

This is an uncharacterized protein from Rhizobium leguminosarum bv. phaseoli.